Here is a 1061-residue protein sequence, read N- to C-terminus: DNA primase TraC (1061 aa).

In terms of domain architecture, Toprim spans 850–938 (PALVIGEGYA…GKAIFPIFAP (89 aa)). The disordered stretch occupies residues 1034-1061 (EGQRQKVQQLKQQDIEQQEQRQRRARTY).

Functionally, required for autonomous replication in E.coli. Transferred into the recipient cell during bacterial conjugation. Catalyzes the synthesis of short oligoribonucleotide primers with CpA or pCpA at their 5'-termini on a single-stranded template DNA. The sequence is that of DNA primase TraC (traC) from Escherichia coli.